We begin with the raw amino-acid sequence, 431 residues long: Alpha-gurjunene synthase (431 aa).

Residues aspartate 126 and aspartate 130 each contribute to the Mg(2+) site. A (2E,6E)-farnesyl diphosphate-binding site is contributed by arginine 267. Positions 321 and 325 each coordinate Mg(2+). Lysine 328 contacts (2E,6E)-farnesyl diphosphate. Mg(2+) is bound at residue glutamate 329. A (2E,6E)-farnesyl diphosphate-binding site is contributed by 412-413 (RY).

This sequence belongs to the terpene synthase family. It depends on Mg(2+) as a cofactor.

The enzyme catalyses (2E,6E)-farnesyl diphosphate = (-)-alpha-gurjunene + diphosphate. It carries out the reaction (2E,6E)-farnesyl diphosphate + H2O = 5-hydroxy-alpha-gurjunene + diphosphate. It participates in secondary metabolite biosynthesis; terpenoid biosynthesis. Catalyzes the conversion of (2E,6E)-farnesyl diphosphate (FPP) into the sesquiterpene alcohols (-)-alpha-gurjunene and 5-hydroxy-alpha-gurjunene. Other unidentified sesquiterpene alcohols found to be catalyzed by MTPSL4 may arise from carbocation reaction intermediates along the catalytic cascade to gurjunene being quenched by a water molecule, yielding formation of the alcohols. The chain is Alpha-gurjunene synthase from Marchantia polymorpha (Common liverwort).